The sequence spans 124 residues: Large ribosomal subunit protein bL20c (124 aa).

This sequence belongs to the bacterial ribosomal protein bL20 family.

The protein localises to the plastid. Its subcellular location is the chloroplast. Its function is as follows. Binds directly to 23S ribosomal RNA and is necessary for the in vitro assembly process of the 50S ribosomal subunit. It is not involved in the protein synthesizing functions of that subunit. The chain is Large ribosomal subunit protein bL20c (rpl20) from Euglena gracilis.